The sequence spans 354 residues: Protein RecA (354 aa).

Residue 65–72 (GPESSGKT) participates in ATP binding.

The protein belongs to the RecA family.

It localises to the cytoplasm. Functionally, can catalyze the hydrolysis of ATP in the presence of single-stranded DNA, the ATP-dependent uptake of single-stranded DNA by duplex DNA, and the ATP-dependent hybridization of homologous single-stranded DNAs. It interacts with LexA causing its activation and leading to its autocatalytic cleavage. The polypeptide is Protein RecA (Vibrio cholerae serotype O1 (strain ATCC 39315 / El Tor Inaba N16961)).